The following is a 161-amino-acid chain: Allophycocyanin alpha chain (161 aa).

The residue at position 71 (Asn71) is an N4-methylasparagine. Cys81 serves as a coordination point for (2R,3E)-phycocyanobilin.

The protein belongs to the phycobiliprotein family. Heterodimer of an alpha and a beta chain. In terms of processing, contains one covalently linked phycocyanobilin chromophore.

It is found in the plastid. The protein resides in the chloroplast thylakoid membrane. Light-harvesting photosynthetic bile pigment-protein from the phycobiliprotein complex. Allophycocyanin has a maximum absorption at approximately 650 nanometers. This Galdieria sulphuraria (Red alga) protein is Allophycocyanin alpha chain (apcA).